The sequence spans 33 residues: Ranatuerin-1T (33 aa).

A disulfide bridge connects residues cysteine 27 and cysteine 33.

As to expression, expressed by the skin glands.

It localises to the secreted. Antibacterial activity against Gram-positive bacterium S.aureus and Gram-negative bacterium E.coli. No activity against C.albicans. This Rana temporaria (European common frog) protein is Ranatuerin-1T.